The primary structure comprises 376 residues: MQCALYDAGRCRSCQWITQSVNEQLSAKTADLHRLLAGLPVEQWCAPIGGPEQHFRNKAKMVVSGSVEKPLFGMLHRDGTPVDLCGCPLYPASFDPVFSALKPFIARAGLTPYNVARKRGELKYLLLTESQFDGGMMLRFVLRSETKLTQLRAALPWLRAQLPQLRVITANIQPVHMAIMEGETEIYLTDQQALAERFNDVPLWIRPQSFFQTNPTVASRLYATARDWVGQLPVRHMWDLFCGVGGFGLHCATPQMQLTGIEIAPEAIACAKQSAAELGLTRLHFQALDSTQFATAQGETPDLVLVNPPRRGIGKPLCDYLAQMAPRFIIYSSCNAQTMAQDIRHLPNYRIQRVQLFDMFPHTAHYEVLALLRRSI.

Residues C3, C11, C14, and C87 each contribute to the [4Fe-4S] cluster site. 4 residues coordinate S-adenosyl-L-methionine: Q212, F241, E262, and N307. The active-site Nucleophile is the C334.

Belongs to the class I-like SAM-binding methyltransferase superfamily. RNA M5U methyltransferase family. RlmC subfamily.

It catalyses the reaction uridine(747) in 23S rRNA + S-adenosyl-L-methionine = 5-methyluridine(747) in 23S rRNA + S-adenosyl-L-homocysteine + H(+). Its function is as follows. Catalyzes the formation of 5-methyl-uridine at position 747 (m5U747) in 23S rRNA. In Salmonella typhimurium (strain LT2 / SGSC1412 / ATCC 700720), this protein is 23S rRNA (uracil(747)-C(5))-methyltransferase RlmC.